The primary structure comprises 493 residues: Acetyl-coenzyme A carboxylase carboxyl transferase subunit beta (493 aa).

The CoA carboxyltransferase N-terminal domain maps to 231-493 (LWVQCENCYG…FKLHAFFPLN (263 aa)). Positions 235, 238, 254, and 257 each coordinate Zn(2+). The C4-type zinc finger occupies 235–257 (CENCYGLNYKKFLKSKINLCEQC).

This sequence belongs to the AccD/PCCB family. Acetyl-CoA carboxylase is a heterohexamer composed of biotin carboxyl carrier protein, biotin carboxylase and 2 subunits each of ACCase subunit alpha and ACCase plastid-coded subunit beta (accD). It depends on Zn(2+) as a cofactor.

The protein localises to the plastid stroma. It catalyses the reaction N(6)-carboxybiotinyl-L-lysyl-[protein] + acetyl-CoA = N(6)-biotinyl-L-lysyl-[protein] + malonyl-CoA. Its pathway is lipid metabolism; malonyl-CoA biosynthesis; malonyl-CoA from acetyl-CoA: step 1/1. In terms of biological role, component of the acetyl coenzyme A carboxylase (ACC) complex. Biotin carboxylase (BC) catalyzes the carboxylation of biotin on its carrier protein (BCCP) and then the CO(2) group is transferred by the transcarboxylase to acetyl-CoA to form malonyl-CoA. In Epifagus virginiana (Beechdrops), this protein is Acetyl-coenzyme A carboxylase carboxyl transferase subunit beta.